We begin with the raw amino-acid sequence, 313 residues long: Ribosomal RNA small subunit methyltransferase H (313 aa).

S-adenosyl-L-methionine contacts are provided by residues 35–37, D55, F79, D100, and Q107; that span reads GGH.

It belongs to the methyltransferase superfamily. RsmH family.

Its subcellular location is the cytoplasm. It catalyses the reaction cytidine(1402) in 16S rRNA + S-adenosyl-L-methionine = N(4)-methylcytidine(1402) in 16S rRNA + S-adenosyl-L-homocysteine + H(+). Functionally, specifically methylates the N4 position of cytidine in position 1402 (C1402) of 16S rRNA. This Burkholderia multivorans (strain ATCC 17616 / 249) protein is Ribosomal RNA small subunit methyltransferase H.